Consider the following 310-residue polypeptide: uncharacterized protein (310 aa).

Belongs to the YiaX1 family.

This is an uncharacterized protein from Salmonella typhimurium (strain LT2 / SGSC1412 / ATCC 700720).